The chain runs to 164 residues: UPF0114 protein YqhA (164 aa).

3 consecutive transmembrane segments (helical) span residues 15–35 (LLAP…LKFF), 53–73 (LILV…LVMV), and 136–156 (LMWY…MGYL).

This sequence belongs to the UPF0114 family.

It is found in the cell membrane. This is UPF0114 protein YqhA from Salmonella agona (strain SL483).